Here is a 1117-residue protein sequence, read N- to C-terminus: DNA polymerase (1117 aa).

The interval 591-621 is disordered; it reads ESSPVASFEEDSEQTSDSSLGEVSSQGSSDG. Positions 606 to 618 are enriched in low complexity; it reads SDSSLGEVSSQGS.

The protein belongs to the DNA polymerase type-B family.

Its subcellular location is the host nucleus. The enzyme catalyses DNA(n) + a 2'-deoxyribonucleoside 5'-triphosphate = DNA(n+1) + diphosphate. This Cavia porcellus (Guinea pig) protein is DNA polymerase.